The sequence spans 102 residues: Flagellar hook-basal body complex protein FliE 1 (102 aa).

It belongs to the FliE family.

It localises to the bacterial flagellum basal body. This is Flagellar hook-basal body complex protein FliE 1 (fliE1) from Bradyrhizobium diazoefficiens (strain JCM 10833 / BCRC 13528 / IAM 13628 / NBRC 14792 / USDA 110).